A 278-amino-acid polypeptide reads, in one-letter code: Glutamyl-Q tRNA(Asp) synthetase (278 aa).

L-glutamate is bound by residues 4 to 8 (RFAPS) and Glu40. Positions 7 to 17 (PSPTGPLHLGH) match the 'HIGH' region motif. 4 residues coordinate Zn(2+): Cys96, Cys98, Tyr123, and Cys127. The L-glutamate site is built by Tyr193 and Arg211. A 'KMSKS' region motif is present at residues 249–253 (RLAKR). Position 252 (Lys252) interacts with ATP.

The protein belongs to the class-I aminoacyl-tRNA synthetase family. GluQ subfamily. Zn(2+) serves as cofactor.

In terms of biological role, catalyzes the tRNA-independent activation of glutamate in presence of ATP and the subsequent transfer of glutamate onto a tRNA(Asp). Glutamate is transferred on the 2-amino-5-(4,5-dihydroxy-2-cyclopenten-1-yl) moiety of the queuosine in the wobble position of the QUC anticodon. In Rhodobacter capsulatus (strain ATCC BAA-309 / NBRC 16581 / SB1003), this protein is Glutamyl-Q tRNA(Asp) synthetase (gluQ).